The primary structure comprises 224 residues: Cysteine-rich hydrophobic domain-containing protein 1 (224 aa).

Positions 1 to 80 are disordered; it reads MSILLPNMAE…PPPRVVSEEH (80 aa). The span at 13–25 shows a compositional bias: acidic residues; sequence TISELEEEEEEEA. Over residues 26–40 the composition is skewed to low complexity; sequence ATSSSSPSSSSSVSG. Acidic residues predominate over residues 41 to 69; that stretch reads PDDDEEDEEEEEEEEEEEEEEEEEEEEEA. Residues 42 to 70 are a coiled coil; that stretch reads DDDEEDEEEEEEEEEEEEEEEEEEEEEAP.

This sequence belongs to the CHIC family. In terms of processing, palmitoylated. Equally expressed in various parts of the brain.

Its subcellular location is the cell membrane. It localises to the cytoplasmic vesicle. This chain is Cysteine-rich hydrophobic domain-containing protein 1 (CHIC1), found in Homo sapiens (Human).